The sequence spans 309 residues: Porphobilinogen deaminase (309 aa).

An S-(dipyrrolylmethanemethyl)cysteine modification is found at Cys241.

It belongs to the HMBS family. In terms of assembly, monomer. Dipyrromethane is required as a cofactor.

It catalyses the reaction 4 porphobilinogen + H2O = hydroxymethylbilane + 4 NH4(+). Its pathway is porphyrin-containing compound metabolism; protoporphyrin-IX biosynthesis; coproporphyrinogen-III from 5-aminolevulinate: step 2/4. Functionally, tetrapolymerization of the monopyrrole PBG into the hydroxymethylbilane pre-uroporphyrinogen in several discrete steps. This chain is Porphobilinogen deaminase, found in Bacillus anthracis (strain A0248).